Here is a 322-residue protein sequence, read N- to C-terminus: Ethylmalonyl-CoA decarboxylase (322 aa).

Lys232 carries the N6-acetyllysine; alternate modification. Lys232 is subject to N6-succinyllysine; alternate. Lys316 is subject to N6-succinyllysine.

It belongs to the enoyl-CoA hydratase/isomerase family.

It is found in the cytoplasm. The protein resides in the cytosol. It catalyses the reaction (2S)-ethylmalonyl-CoA + H(+) = butanoyl-CoA + CO2. It carries out the reaction (S)-methylmalonyl-CoA + H(+) = propanoyl-CoA + CO2. The enzyme catalyses (2R)-ethylmalonyl-CoA + H(+) = butanoyl-CoA + CO2. Its function is as follows. Decarboxylates ethylmalonyl-CoA, a potentially toxic metabolite, to form butyryl-CoA, suggesting it might be involved in metabolite proofreading. Acts preferentially on (S)-ethylmalonyl-CoA but also has some activity on the (R)-isomer. Also has methylmalonyl-CoA decarboxylase activity at lower level. This Mus musculus (Mouse) protein is Ethylmalonyl-CoA decarboxylase (Echdc1).